A 167-amino-acid polypeptide reads, in one-letter code: Respiratory supercomplex factor 1-A, mitochondrial (167 aa).

An HIG1 domain is found at 1 to 86 (MCSDFEEETS…TERKQRREFE (86 aa)). A run of 2 helical transmembrane segments spans residues 21 to 38 (EPLIPLGCAATCYALYRA) and 53 to 75 (MFRARIYAQFFTLLAVVAGGMYY). Positions 75-107 (YKTERKQRREFEKKVEERKAQEKRDAWLRELEA) form a coiled coil.

Belongs to the RCF1 family. In terms of assembly, associates with the respiratory chain complex III/complex IV supercomplex.

Its subcellular location is the mitochondrion membrane. In terms of biological role, cytochrome c oxidase subunit which plays a role in assembly of respiratory supercomplexes. The chain is Respiratory supercomplex factor 1-A, mitochondrial (rcf1-A) from Talaromyces marneffei (strain ATCC 18224 / CBS 334.59 / QM 7333) (Penicillium marneffei).